The following is a 248-amino-acid chain: Uridylate kinase (248 aa).

15–18 (KLSG) contacts ATP. An involved in allosteric activation by GTP region spans residues 23–28 (GAEGFG). A UMP-binding site is contributed by Gly57. 2 residues coordinate ATP: Gly58 and Arg62. Residues Asp77 and 138–145 (TGNPFFTT) each bind UMP. Residues Thr165, Tyr171, and Asp174 each coordinate ATP.

The protein belongs to the UMP kinase family. Homohexamer.

Its subcellular location is the cytoplasm. The catalysed reaction is UMP + ATP = UDP + ADP. It functions in the pathway pyrimidine metabolism; CTP biosynthesis via de novo pathway; UDP from UMP (UMPK route): step 1/1. Its activity is regulated as follows. Allosterically activated by GTP. Inhibited by UTP. Functionally, catalyzes the reversible phosphorylation of UMP to UDP. This chain is Uridylate kinase, found in Yersinia enterocolitica serotype O:8 / biotype 1B (strain NCTC 13174 / 8081).